Here is a 502-residue protein sequence, read N- to C-terminus: D-alanine--D-alanyl carrier protein ligase (502 aa).

ATP is bound at residue 150-151 (TS). Asp-195 contacts D-alanine. Residue 290 to 295 (NTYGPT) coordinates ATP. D-alanine is bound at residue Val-299. Residues Asp-381 and Lys-490 each contribute to the ATP site. A D-alanine-binding site is contributed by Lys-490.

This sequence belongs to the ATP-dependent AMP-binding enzyme family. DltA subfamily.

It localises to the cytoplasm. It carries out the reaction holo-[D-alanyl-carrier protein] + D-alanine + ATP = D-alanyl-[D-alanyl-carrier protein] + AMP + diphosphate. It participates in cell wall biogenesis; lipoteichoic acid biosynthesis. Its function is as follows. Catalyzes the first step in the D-alanylation of lipoteichoic acid (LTA), the activation of D-alanine and its transfer onto the D-alanyl carrier protein (Dcp) DltC. In an ATP-dependent two-step reaction, forms a high energy D-alanyl-AMP intermediate, followed by transfer of the D-alanyl residue as a thiol ester to the phosphopantheinyl prosthetic group of the Dcp. D-alanylation of LTA plays an important role in modulating the properties of the cell wall in Gram-positive bacteria, influencing the net charge of the cell wall. The polypeptide is D-alanine--D-alanyl carrier protein ligase (Bacillus licheniformis (strain ATCC 14580 / DSM 13 / JCM 2505 / CCUG 7422 / NBRC 12200 / NCIMB 9375 / NCTC 10341 / NRRL NRS-1264 / Gibson 46)).